We begin with the raw amino-acid sequence, 175 residues long: Small ribosomal subunit protein uS5 (175 aa).

An S5 DRBM domain is found at 11-74 (LSEVLVDVNR…QAAKKRMMKV (64 aa)).

It belongs to the universal ribosomal protein uS5 family. Part of the 30S ribosomal subunit. Contacts proteins S4 and S8.

With S4 and S12 plays an important role in translational accuracy. Its function is as follows. Located at the back of the 30S subunit body where it stabilizes the conformation of the head with respect to the body. This is Small ribosomal subunit protein uS5 from Rickettsia typhi (strain ATCC VR-144 / Wilmington).